The primary structure comprises 95 residues: Cytochrome b-c1 complex subunit 8, mitochondrial (95 aa).

The chain crosses the membrane as a helical span at residues 57–74 (FLYVAIPFVVVWSIWTRA).

It belongs to the UQCRQ/QCR8 family. Component of the ubiquinol-cytochrome c oxidoreductase (cytochrome b-c1 complex, complex III, CIII), a multisubunit enzyme composed of 10 subunits. The complex is composed of 3 respiratory subunits cytochrome b (COB), cytochrome c1 (CYT1) and Rieske protein (RIP1), 2 core protein subunits COR1 and QCR2, and 5 low-molecular weight protein subunits QCR6, QCR7, QCR8, QCR9 and QCR10. The complex exists as an obligatory dimer and forms supercomplexes (SCs) in the inner mitochondrial membrane with a monomer or a dimer of cytochrome c oxidase (complex IV, CIV), resulting in 2 different assemblies (supercomplexes III(2)IV and III(2)IV(2)).

It is found in the membrane. The protein resides in the mitochondrion inner membrane. Component of the ubiquinol-cytochrome c oxidoreductase, a multisubunit transmembrane complex that is part of the mitochondrial electron transport chain which drives oxidative phosphorylation. The complex plays an important role in the uptake of multiple carbon sources present in different host niches. In Candida albicans (strain SC5314 / ATCC MYA-2876) (Yeast), this protein is Cytochrome b-c1 complex subunit 8, mitochondrial.